A 151-amino-acid chain; its full sequence is MQEGQNRKTSSLSILAIAGVEPYQEKPGEEYMNEAQLAHFRRILEAWRNQLRDEVDRTVTHMQDEAANFPDPVDRAAQEEEFSLELRNRDRERKLIKKIEKTLKKVEDEDFGYCESCGVEIGIRRLEARPTADLCIDCKTLAEIREKQMAG.

The stretch at 33-54 forms a coiled coil; that stretch reads NEAQLAHFRRILEAWRNQLRDE. Cysteine 114, cysteine 117, cysteine 135, and cysteine 138 together coordinate Zn(2+). The segment at 114 to 138 adopts a dksA C4-type zinc-finger fold; sequence CESCGVEIGIRRLEARPTADLCIDC.

It belongs to the DksA family. In terms of assembly, interacts directly with the RNA polymerase.

It localises to the cytoplasm. Functionally, transcription factor that acts by binding directly to the RNA polymerase (RNAP). Required for negative regulation of rRNA expression and positive regulation of several amino acid biosynthesis promoters. Also required for regulation of fis expression. This is RNA polymerase-binding transcription factor DksA from Escherichia coli O157:H7.